Consider the following 671-residue polypeptide: MSSNSPTNLADRYAFLQAELARLEHAYYVLDNPLLPDIEYDRLYRELLDIEAAHPQWVTSESLSQRVGGTALKEFDSVTHAVPMLSLNNAFEDSELIAFDRRCREALHVEHVAYAGELKFDGLAISLRYENGTLVTAATRGDGASGEDVTANIKTIRAIPLKLTGKNIPEILEVRGEVFMYLKDFEKMNRQAAELGEKEFANPRNAAAGSLRQLDSKITAKRPLSFFAYGLGALEPQSWLPKTHEELLNAYVELGLPVCSERRVLHSVEEILAFYNEIGAKRDSLPYDIDGVVYKVNSFAEQAKLGFVSRAPRFALAHKYPAQEALTTVLGIDVQVGRTGAITPVARLAPVEVGGVTVTNATLHNEDEVKRKDVRIGDTVSVRRAGDVIPEVVSVIKERRPSDAKEFVMPSRCPVCDSHIERLADEAVARCSGGLFCGAQRKQALIHFAHRRALDIEGLGEKIVDQLVDQNLVRTPADLYRLGFTALANLERMGEKSADNLIQAINQSRNTTLARFIFALGIRHVGETTAKDLANHYQSMHALMDASVEELLTVKDVGPVVADSITSFMQEAHNREVIEQLLASGMQLSVEEKIISAAVFGKTFVLTGTFPTMTRDEAKDLLEKAGAKVAGSVSKKTDYVVAGTDAGSKLAKAEELGVPVIDEEEMLNLLK.

Residues 37–41, 86–87, and E117 each bind NAD(+); these read DIEYD and SL. K119 acts as the N6-AMP-lysine intermediate in catalysis. NAD(+) contacts are provided by R140, E177, K295, and K319. Residues C413, C416, C431, and C437 each coordinate Zn(2+). A BRCT domain is found at 594–671; that stretch reads IISAAVFGKT…DEEEMLNLLK (78 aa).

Belongs to the NAD-dependent DNA ligase family. LigA subfamily. It depends on Mg(2+) as a cofactor. The cofactor is Mn(2+).

The enzyme catalyses NAD(+) + (deoxyribonucleotide)n-3'-hydroxyl + 5'-phospho-(deoxyribonucleotide)m = (deoxyribonucleotide)n+m + AMP + beta-nicotinamide D-nucleotide.. Its function is as follows. DNA ligase that catalyzes the formation of phosphodiester linkages between 5'-phosphoryl and 3'-hydroxyl groups in double-stranded DNA using NAD as a coenzyme and as the energy source for the reaction. It is essential for DNA replication and repair of damaged DNA. The chain is DNA ligase from Polynucleobacter asymbioticus (strain DSM 18221 / CIP 109841 / QLW-P1DMWA-1) (Polynucleobacter necessarius subsp. asymbioticus).